Consider the following 116-residue polypeptide: Putative oxygen-evolving enhancer protein 1 (116 aa).

Belongs to the PsbO family.

Its subcellular location is the plastid. It localises to the chloroplast thylakoid membrane. Its function is as follows. Stabilizes the manganese cluster which is the primary site of water splitting. This is Putative oxygen-evolving enhancer protein 1 from Pinus strobus (Eastern white pine).